Reading from the N-terminus, the 170-residue chain is Acetyl-CoA decarbonylase/synthase complex subunit epsilon 2 (170 aa).

Belongs to the CdhB family. As to quaternary structure, heterotetramer of two alpha and two epsilon subunits. The ACDS complex is made up of alpha, epsilon, beta, gamma and delta subunits with a probable stoichiometry of (alpha(2)epsilon(2))(4)-beta(8)-(gamma(1)delta(1))(8).

The protein operates within one-carbon metabolism; methanogenesis from acetate. Part of a complex that catalyzes the reversible cleavage of acetyl-CoA, allowing growth on acetate as sole source of carbon and energy. The alpha-epsilon subcomponent functions as a carbon monoxide dehydrogenase. The precise role of the epsilon subunit is unclear; it may have a stabilizing role within the alpha(2)epsilon(2) component and/or be involved in electron transfer to FAD during a potential FAD-mediated CO oxidation. In Methanosarcina thermophila, this protein is Acetyl-CoA decarbonylase/synthase complex subunit epsilon 2 (cdhB2).